A 213-amino-acid chain; its full sequence is Transmembrane protein 186 (213 aa).

At 1–79 (MAALLRAVRR…FLSRLKLAQT (79 aa)) the chain is on the mitochondrial matrix side. A helical membrane pass occupies residues 80–100 (ALTVVALPPGYYLYSQGLLTL). At 101–102 (NT) the chain is on the mitochondrial intermembrane side. The helical transmembrane segment at 103–123 (VCLMSGISGFALTMLCWMSYF) threads the bilayer. At 124-213 (LRRLVGILYL…QVFGVHQMLK (90 aa)) the chain is on the mitochondrial matrix side.

It belongs to the TMEM186 family. Part of the mitochondrial complex I assembly/MCIA complex that comprises at least the core subunits TMEM126B, NDUFAF1, ECSIT and ACAD9 and complement subunits such as COA1 and TMEM186. Interacts with MT-ND3.

The protein resides in the mitochondrion inner membrane. In terms of biological role, as part of the MCIA complex, required for efficient assembly of the mitochondrial complex I. This chain is Transmembrane protein 186, found in Homo sapiens (Human).